The chain runs to 169 residues: Peptide deformylase (169 aa).

Fe cation-binding residues include Cys91 and His133. Glu134 is a catalytic residue. Residue His137 participates in Fe cation binding.

This sequence belongs to the polypeptide deformylase family. Requires Fe(2+) as cofactor.

The enzyme catalyses N-terminal N-formyl-L-methionyl-[peptide] + H2O = N-terminal L-methionyl-[peptide] + formate. Functionally, removes the formyl group from the N-terminal Met of newly synthesized proteins. Requires at least a dipeptide for an efficient rate of reaction. N-terminal L-methionine is a prerequisite for activity but the enzyme has broad specificity at other positions. In Citrobacter koseri (strain ATCC BAA-895 / CDC 4225-83 / SGSC4696), this protein is Peptide deformylase.